The chain runs to 391 residues: 1-deoxy-D-xylulose 5-phosphate reductoisomerase (391 aa).

NADPH-binding residues include threonine 11, glycine 12, serine 13, isoleucine 14, glycine 37, asparagine 39, and asparagine 125. Lysine 126 lines the 1-deoxy-D-xylulose 5-phosphate pocket. Residue glutamate 127 coordinates NADPH. Aspartate 151 lines the Mn(2+) pocket. The 1-deoxy-D-xylulose 5-phosphate site is built by serine 152, glutamate 153, serine 176, and histidine 199. A Mn(2+)-binding site is contributed by glutamate 153. Residue glycine 205 coordinates NADPH. 4 residues coordinate 1-deoxy-D-xylulose 5-phosphate: serine 212, asparagine 217, lysine 218, and glutamate 221. Residue glutamate 221 coordinates Mn(2+).

It belongs to the DXR family. Mg(2+) serves as cofactor. Requires Mn(2+) as cofactor.

It catalyses the reaction 2-C-methyl-D-erythritol 4-phosphate + NADP(+) = 1-deoxy-D-xylulose 5-phosphate + NADPH + H(+). It functions in the pathway isoprenoid biosynthesis; isopentenyl diphosphate biosynthesis via DXP pathway; isopentenyl diphosphate from 1-deoxy-D-xylulose 5-phosphate: step 1/6. Its function is as follows. Catalyzes the NADPH-dependent rearrangement and reduction of 1-deoxy-D-xylulose-5-phosphate (DXP) to 2-C-methyl-D-erythritol 4-phosphate (MEP). This is 1-deoxy-D-xylulose 5-phosphate reductoisomerase from Heliobacterium modesticaldum (strain ATCC 51547 / Ice1).